The primary structure comprises 413 residues: Tyrosine--tRNA ligase (413 aa).

An L-tyrosine-binding site is contributed by Tyr-33. The 'HIGH' region signature appears at Pro-38 to His-47. Positions 162 and 166 each coordinate L-tyrosine. The 'KMSKS' region signature appears at Lys-225–Thr-229. Lys-228 contributes to the ATP binding site. An S4 RNA-binding domain is found at Thr-346–Lys-413.

The protein belongs to the class-I aminoacyl-tRNA synthetase family. TyrS type 1 subfamily. In terms of assembly, homodimer.

The protein resides in the cytoplasm. The catalysed reaction is tRNA(Tyr) + L-tyrosine + ATP = L-tyrosyl-tRNA(Tyr) + AMP + diphosphate + H(+). In terms of biological role, catalyzes the attachment of tyrosine to tRNA(Tyr) in a two-step reaction: tyrosine is first activated by ATP to form Tyr-AMP and then transferred to the acceptor end of tRNA(Tyr). In Mesoplasma florum (strain ATCC 33453 / NBRC 100688 / NCTC 11704 / L1) (Acholeplasma florum), this protein is Tyrosine--tRNA ligase.